Reading from the N-terminus, the 348-residue chain is Protein DMR6-LIKE OXYGENASE 2 (348 aa).

In terms of domain architecture, Fe2OG dioxygenase spans 194-294 (KHGQHMAINY…RISIPTFYCP (101 aa)). Histidine 219, aspartate 221, and histidine 275 together coordinate Fe cation. 2-oxoglutarate is bound at residue arginine 285.

The protein belongs to the iron/ascorbate-dependent oxidoreductase family. It depends on Fe(2+) as a cofactor.

The catalysed reaction is salicylate + NADH + O2 + H(+) = 2,3-dihydroxybenzoate + NAD(+) + H2O. Functionally, converts salicylic acid (SA) to 2,3-dihydroxybenzoic acid (2,3-DHBA). Negative regulator of defense against Hyaloperonospora arabidopsidis. Its function is as follows. (Microbial infection) Confers susceptibility to the downy mildew pathogen Hyaloperonospora arabidopsidis. This Arabidopsis thaliana (Mouse-ear cress) protein is Protein DMR6-LIKE OXYGENASE 2.